The primary structure comprises 413 residues: Gamma-glutamyl phosphate reductase (413 aa).

The protein belongs to the gamma-glutamyl phosphate reductase family.

The protein resides in the cytoplasm. It catalyses the reaction L-glutamate 5-semialdehyde + phosphate + NADP(+) = L-glutamyl 5-phosphate + NADPH + H(+). Its pathway is amino-acid biosynthesis; L-proline biosynthesis; L-glutamate 5-semialdehyde from L-glutamate: step 2/2. Its function is as follows. Catalyzes the NADPH-dependent reduction of L-glutamate 5-phosphate into L-glutamate 5-semialdehyde and phosphate. The product spontaneously undergoes cyclization to form 1-pyrroline-5-carboxylate. The polypeptide is Gamma-glutamyl phosphate reductase (Thermus thermophilus (strain ATCC BAA-163 / DSM 7039 / HB27)).